Reading from the N-terminus, the 121-residue chain is MSAVAEHIATQMPAPIVFTDSAAGKVKELVEEEGNPELKLRVFVQGGGCSGFQYGFTFDEIVNDDDTKMEKNGVMLLIDAMSLQYLVGAEIDYKEDLEGAQFVIKNPNATTTCGCGSSFST.

Positions 49, 113, and 115 each coordinate iron-sulfur cluster.

It belongs to the HesB/IscA family. As to quaternary structure, homodimer. Iron-sulfur cluster serves as cofactor.

Its function is as follows. Required for insertion of 4Fe-4S clusters. The sequence is that of Putative iron-sulfur cluster insertion protein ErpA from Methylibium petroleiphilum (strain ATCC BAA-1232 / LMG 22953 / PM1).